A 163-amino-acid chain; its full sequence is Nucleotide-binding protein GTNG_0630 (163 aa).

The protein belongs to the YajQ family.

In terms of biological role, nucleotide-binding protein. This Geobacillus thermodenitrificans (strain NG80-2) protein is Nucleotide-binding protein GTNG_0630.